We begin with the raw amino-acid sequence, 275 residues long: NH(3)-dependent NAD(+) synthetase (275 aa).

46–53 (GISGGQDS) contacts ATP. Asp52 is a binding site for Mg(2+). Deamido-NAD(+) is bound at residue Arg140. Thr160 provides a ligand contact to ATP. Residue Glu165 participates in Mg(2+) binding. Positions 173 and 180 each coordinate deamido-NAD(+). Positions 189 and 211 each coordinate ATP. 260–261 (HK) is a deamido-NAD(+) binding site.

Belongs to the NAD synthetase family. Homodimer.

The enzyme catalyses deamido-NAD(+) + NH4(+) + ATP = AMP + diphosphate + NAD(+) + H(+). Its pathway is cofactor biosynthesis; NAD(+) biosynthesis; NAD(+) from deamido-NAD(+) (ammonia route): step 1/1. Its function is as follows. Catalyzes the ATP-dependent amidation of deamido-NAD to form NAD. Uses ammonia as a nitrogen source. The polypeptide is NH(3)-dependent NAD(+) synthetase (Salmonella enteritidis PT4 (strain P125109)).